Consider the following 242-residue polypeptide: 1-(5-phosphoribosyl)-5-[(5-phosphoribosylamino)methylideneamino] imidazole-4-carboxamide isomerase (242 aa).

The Proton acceptor role is filled by D8. D129 acts as the Proton donor in catalysis.

Belongs to the HisA/HisF family.

The protein localises to the cytoplasm. The enzyme catalyses 1-(5-phospho-beta-D-ribosyl)-5-[(5-phospho-beta-D-ribosylamino)methylideneamino]imidazole-4-carboxamide = 5-[(5-phospho-1-deoxy-D-ribulos-1-ylimino)methylamino]-1-(5-phospho-beta-D-ribosyl)imidazole-4-carboxamide. It participates in amino-acid biosynthesis; L-histidine biosynthesis; L-histidine from 5-phospho-alpha-D-ribose 1-diphosphate: step 4/9. The protein is 1-(5-phosphoribosyl)-5-[(5-phosphoribosylamino)methylideneamino] imidazole-4-carboxamide isomerase of Dictyoglomus thermophilum (strain ATCC 35947 / DSM 3960 / H-6-12).